Reading from the N-terminus, the 84-residue chain is U4-theraphotoxin-Hhn1a (84 aa).

A signal peptide spans 1–22; that stretch reads MKVTLIAILTCAAVLVLHTTAA. Positions 23–47 are excised as a propeptide; it reads EELEESQLMEVGMPDTELAAVDGER. Cystine bridges form between C51–C65, C55–C76, and C70–C81.

This sequence belongs to the neurotoxin 12 (Hwtx-2) family. 02 (Hwtx-2) subfamily. In terms of tissue distribution, expressed by the venom gland.

Its subcellular location is the secreted. In terms of biological role, postsynaptic neurotoxin. This is U4-theraphotoxin-Hhn1a from Cyriopagopus hainanus (Chinese bird spider).